The following is a 254-amino-acid chain: Leucyl/phenylalanyl-tRNA--protein transferase (254 aa).

Belongs to the L/F-transferase family.

Its subcellular location is the cytoplasm. The enzyme catalyses N-terminal L-lysyl-[protein] + L-leucyl-tRNA(Leu) = N-terminal L-leucyl-L-lysyl-[protein] + tRNA(Leu) + H(+). The catalysed reaction is N-terminal L-arginyl-[protein] + L-leucyl-tRNA(Leu) = N-terminal L-leucyl-L-arginyl-[protein] + tRNA(Leu) + H(+). It catalyses the reaction L-phenylalanyl-tRNA(Phe) + an N-terminal L-alpha-aminoacyl-[protein] = an N-terminal L-phenylalanyl-L-alpha-aminoacyl-[protein] + tRNA(Phe). In terms of biological role, functions in the N-end rule pathway of protein degradation where it conjugates Leu, Phe and, less efficiently, Met from aminoacyl-tRNAs to the N-termini of proteins containing an N-terminal arginine or lysine. This is Leucyl/phenylalanyl-tRNA--protein transferase from Burkholderia orbicola (strain MC0-3).